A 168-amino-acid polypeptide reads, in one-letter code: S-ribosylhomocysteine lyase (168 aa).

H54, H58, and C128 together coordinate Fe cation.

Belongs to the LuxS family. As to quaternary structure, homodimer. Fe cation serves as cofactor.

The catalysed reaction is S-(5-deoxy-D-ribos-5-yl)-L-homocysteine = (S)-4,5-dihydroxypentane-2,3-dione + L-homocysteine. Functionally, involved in the synthesis of autoinducer 2 (AI-2) which is secreted by bacteria and is used to communicate both the cell density and the metabolic potential of the environment. The regulation of gene expression in response to changes in cell density is called quorum sensing. Catalyzes the transformation of S-ribosylhomocysteine (RHC) to homocysteine (HC) and 4,5-dihydroxy-2,3-pentadione (DPD). This chain is S-ribosylhomocysteine lyase, found in Neisseria meningitidis serogroup A / serotype 4A (strain DSM 15465 / Z2491).